The primary structure comprises 426 residues: Serine--tRNA ligase (426 aa).

Position 233–235 (233–235) interacts with L-serine; it reads TAE. An ATP-binding site is contributed by 264–266; that stretch reads RRE. E287 is a binding site for L-serine. 351–354 lines the ATP pocket; it reads EISS. Residue S386 coordinates L-serine.

This sequence belongs to the class-II aminoacyl-tRNA synthetase family. Type-1 seryl-tRNA synthetase subfamily. In terms of assembly, homodimer. The tRNA molecule binds across the dimer.

The protein resides in the cytoplasm. The catalysed reaction is tRNA(Ser) + L-serine + ATP = L-seryl-tRNA(Ser) + AMP + diphosphate + H(+). The enzyme catalyses tRNA(Sec) + L-serine + ATP = L-seryl-tRNA(Sec) + AMP + diphosphate + H(+). It functions in the pathway aminoacyl-tRNA biosynthesis; selenocysteinyl-tRNA(Sec) biosynthesis; L-seryl-tRNA(Sec) from L-serine and tRNA(Sec): step 1/1. Functionally, catalyzes the attachment of serine to tRNA(Ser). Is also able to aminoacylate tRNA(Sec) with serine, to form the misacylated tRNA L-seryl-tRNA(Sec), which will be further converted into selenocysteinyl-tRNA(Sec). The sequence is that of Serine--tRNA ligase from Prochlorococcus marinus (strain NATL1A).